We begin with the raw amino-acid sequence, 611 residues long: tRNA uridine 5-carboxymethylaminomethyl modification enzyme MnmG (611 aa).

Position 14 to 19 (14 to 19) interacts with FAD; sequence GAGHAG. 274-288 lines the NAD(+) pocket; it reads GPRYCPSIEDKIVKF.

It belongs to the MnmG family. As to quaternary structure, homodimer. Heterotetramer of two MnmE and two MnmG subunits. It depends on FAD as a cofactor.

Its subcellular location is the cytoplasm. In terms of biological role, NAD-binding protein involved in the addition of a carboxymethylaminomethyl (cmnm) group at the wobble position (U34) of certain tRNAs, forming tRNA-cmnm(5)s(2)U34. The chain is tRNA uridine 5-carboxymethylaminomethyl modification enzyme MnmG from Chlamydia felis (strain Fe/C-56) (Chlamydophila felis).